A 145-amino-acid polypeptide reads, in one-letter code: Ribonuclease P protein component (145 aa).

Residues 119 to 145 form a disordered region; that stretch reads PLPAAPGTMPPARTVRPSSPSPTEPEL.

Belongs to the RnpA family. As to quaternary structure, consists of a catalytic RNA component (M1 or rnpB) and a protein subunit.

It catalyses the reaction Endonucleolytic cleavage of RNA, removing 5'-extranucleotides from tRNA precursor.. Its function is as follows. RNaseP catalyzes the removal of the 5'-leader sequence from pre-tRNA to produce the mature 5'-terminus. It can also cleave other RNA substrates such as 4.5S RNA. The protein component plays an auxiliary but essential role in vivo by binding to the 5'-leader sequence and broadening the substrate specificity of the ribozyme. In Xanthomonas euvesicatoria pv. vesicatoria (strain 85-10) (Xanthomonas campestris pv. vesicatoria), this protein is Ribonuclease P protein component.